The sequence spans 145 residues: D-aminoacyl-tRNA deacylase (145 aa).

Positions 137–138 match the Gly-cisPro motif, important for rejection of L-amino acids motif; it reads GP.

Belongs to the DTD family. In terms of assembly, homodimer.

It is found in the cytoplasm. The enzyme catalyses glycyl-tRNA(Ala) + H2O = tRNA(Ala) + glycine + H(+). The catalysed reaction is a D-aminoacyl-tRNA + H2O = a tRNA + a D-alpha-amino acid + H(+). Its function is as follows. An aminoacyl-tRNA editing enzyme that deacylates mischarged D-aminoacyl-tRNAs. Also deacylates mischarged glycyl-tRNA(Ala), protecting cells against glycine mischarging by AlaRS. Acts via tRNA-based rather than protein-based catalysis; rejects L-amino acids rather than detecting D-amino acids in the active site. By recycling D-aminoacyl-tRNA to D-amino acids and free tRNA molecules, this enzyme counteracts the toxicity associated with the formation of D-aminoacyl-tRNA entities in vivo and helps enforce protein L-homochirality. This Shewanella frigidimarina (strain NCIMB 400) protein is D-aminoacyl-tRNA deacylase.